Reading from the N-terminus, the 129-residue chain is Small ribosomal subunit protein uS11 (129 aa).

This sequence belongs to the universal ribosomal protein uS11 family. Part of the 30S ribosomal subunit. Interacts with proteins S7 and S18. Binds to IF-3.

In terms of biological role, located on the platform of the 30S subunit, it bridges several disparate RNA helices of the 16S rRNA. Forms part of the Shine-Dalgarno cleft in the 70S ribosome. This chain is Small ribosomal subunit protein uS11, found in Azorhizobium caulinodans (strain ATCC 43989 / DSM 5975 / JCM 20966 / LMG 6465 / NBRC 14845 / NCIMB 13405 / ORS 571).